Here is a 354-residue protein sequence, read N- to C-terminus: UDP-3-O-acylglucosamine N-acyltransferase (354 aa).

Catalysis depends on histidine 257, which acts as the Proton acceptor. The disordered stretch occupies residues 335–354 (AQQVSKSKLRGRNPGGKQND).

The protein belongs to the transferase hexapeptide repeat family. LpxD subfamily. As to quaternary structure, homotrimer.

The enzyme catalyses a UDP-3-O-[(3R)-3-hydroxyacyl]-alpha-D-glucosamine + a (3R)-hydroxyacyl-[ACP] = a UDP-2-N,3-O-bis[(3R)-3-hydroxyacyl]-alpha-D-glucosamine + holo-[ACP] + H(+). It functions in the pathway bacterial outer membrane biogenesis; LPS lipid A biosynthesis. Catalyzes the N-acylation of UDP-3-O-acylglucosamine using 3-hydroxyacyl-ACP as the acyl donor. Is involved in the biosynthesis of lipid A, a phosphorylated glycolipid that anchors the lipopolysaccharide to the outer membrane of the cell. This chain is UDP-3-O-acylglucosamine N-acyltransferase, found in Rhizobium etli (strain ATCC 51251 / DSM 11541 / JCM 21823 / NBRC 15573 / CFN 42).